We begin with the raw amino-acid sequence, 880 residues long: Alanine--tRNA ligase (880 aa).

Histidine 567, histidine 571, cysteine 669, and histidine 673 together coordinate Zn(2+).

The protein belongs to the class-II aminoacyl-tRNA synthetase family. It depends on Zn(2+) as a cofactor.

The protein localises to the cytoplasm. The enzyme catalyses tRNA(Ala) + L-alanine + ATP = L-alanyl-tRNA(Ala) + AMP + diphosphate. In terms of biological role, catalyzes the attachment of alanine to tRNA(Ala) in a two-step reaction: alanine is first activated by ATP to form Ala-AMP and then transferred to the acceptor end of tRNA(Ala). Also edits incorrectly charged Ser-tRNA(Ala) and Gly-tRNA(Ala) via its editing domain. The chain is Alanine--tRNA ligase from Bacillus anthracis.